Reading from the N-terminus, the 290-residue chain is Probable lipid hydrolase 463L (290 aa).

2 helical membrane passes run 26–46 (TLVLSGGAMRGVYLLGALNGL) and 53–73 (ISTFIGISSGSIICFLLSIGY). One can recognise a PNPLA domain in the interval 27–207 (LVLSGGAMRG…WNNFPIDIAI (181 aa)). The GXSXG signature appears at 58-62 (GISSG). Ser-60 functions as the Nucleophile in the catalytic mechanism. Catalysis depends on Asp-194, which acts as the Proton acceptor. Positions 194 to 196 (DGG) match the DGA/G motif.

The protein localises to the membrane. In terms of biological role, probable lipid hydrolase. This chain is Probable lipid hydrolase 463L, found in Invertebrate iridescent virus 6 (IIV-6).